The primary structure comprises 271 residues: MFRVSNFMVGLANTLVMLVGASAIGYSIYMFVHQGVTDCESAIRIPLLTTGLILFLVSLLGVIGSCFKENLAMVSYLIILFGGIVALMIFSIFLFFVTNKGAGRVVSGRGYKEYRTVDFSTWLNGFVGGKRWVGIRSCLAEANVCDDLSDGRVSQIADAFYHKNLSPIQSGCCKPPSDCNFEFRNATFWIPPSKNETAVAENGDCGTWSNVQTELCFNCNACKAGVLANIREKWRNLLVFNICLLILLITVYSCGCCARRNNRTARKSDSV.

The Cytoplasmic portion of the chain corresponds to 1-7 (MFRVSNF). A helical membrane pass occupies residues 8-28 (MVGLANTLVMLVGASAIGYSI). Topologically, residues 29–44 (YMFVHQGVTDCESAIR) are extracellular. A helical transmembrane segment spans residues 45-65 (IPLLTTGLILFLVSLLGVIGS). Over 66–76 (CFKENLAMVSY) the chain is Cytoplasmic. The chain crosses the membrane as a helical span at residues 77–97 (LIILFGGIVALMIFSIFLFFV). The Extracellular portion of the chain corresponds to 98-236 (TNKGAGRVVS…LANIREKWRN (139 aa)). Residues N185 and N195 are each glycosylated (N-linked (GlcNAc...) asparagine). The chain crosses the membrane as a helical span at residues 237-257 (LLVFNICLLILLITVYSCGCC). At 258–271 (ARRNNRTARKSDSV) the chain is on the cytoplasmic side.

The protein belongs to the tetraspanin (TM4SF) family.

The protein resides in the membrane. May be involved in the regulation of cell differentiation. The polypeptide is Tetraspanin-11 (TET11) (Arabidopsis thaliana (Mouse-ear cress)).